Consider the following 540-residue polypeptide: MNGRSYEVRTFGCQMNVHDSERLCGLLESAGYSPVDPGGEADVVVFNTCAVRENADNRLYGNLGQLVPVKKGHPGMQIAVGGCLAQKDRAAILDRAPWVDVVFGTHNLHRLPVLLERARHNAAAQVEIAEALEVFPSSLPTRRASHHSAWVSISVGCDNTCTFCIVPSLRGRERDRRPGDVLAEVEALVAEGALEITLLGQNVNSYGRSLGDPGAFAKLLAACGRVDGLERVRFTSPHPRDFTDDVIEAMATTSNVCHQLHMPLQSGSDTVLRRMRRSYRRDRFLGIVERVRAAMPDAAITTDIIVGFPGETEADFADTLDVVRAARFSGAFTFQYSPRPGTPAATMDAQVDRATVADRYTRLVALQDEISWAENRALVGRRVEVLVSEGEGRKDGATGRMSGRARDGRLVHFRADEAASSSTGSGPRAGGAAPAVAVAVAPTVRPGDVVETVVTRAAPHHLTADGPLRSHRATRAGDAWALGRDGDGGGAAAAQQPADGRPIVTLGIPSLRPSSPDPVGPASADAASAGADACCTPVRR.

The MTTase N-terminal domain maps to 4–120 (RSYEVRTFGC…LPVLLERARH (117 aa)). Residues Cys-13, Cys-49, Cys-83, Cys-157, Cys-161, and Cys-164 each coordinate [4Fe-4S] cluster. Positions 143-374 (RASHHSAWVS…ALQDEISWAE (232 aa)) constitute a Radical SAM core domain. The TRAM domain occupies 376–468 (RALVGRRVEV…PHHLTADGPL (93 aa)). The tract at residues 480–540 (WALGRDGDGG…ADACCTPVRR (61 aa)) is disordered. Low complexity-rich tracts occupy residues 492 to 502 (AAAQQPADGRP) and 520 to 533 (GPAS…GADA).

The protein belongs to the methylthiotransferase family. MiaB subfamily. Monomer. It depends on [4Fe-4S] cluster as a cofactor.

It is found in the cytoplasm. It carries out the reaction N(6)-dimethylallyladenosine(37) in tRNA + (sulfur carrier)-SH + AH2 + 2 S-adenosyl-L-methionine = 2-methylsulfanyl-N(6)-dimethylallyladenosine(37) in tRNA + (sulfur carrier)-H + 5'-deoxyadenosine + L-methionine + A + S-adenosyl-L-homocysteine + 2 H(+). Catalyzes the methylthiolation of N6-(dimethylallyl)adenosine (i(6)A), leading to the formation of 2-methylthio-N6-(dimethylallyl)adenosine (ms(2)i(6)A) at position 37 in tRNAs that read codons beginning with uridine. This is tRNA-2-methylthio-N(6)-dimethylallyladenosine synthase from Frankia casuarinae (strain DSM 45818 / CECT 9043 / HFP020203 / CcI3).